Here is a 243-residue protein sequence, read N- to C-terminus: Derlin-1.2 (243 aa).

Topologically, residues 1–20 (MSSPAEYYKSLPPISKAYGT) are cytoplasmic. Residues 21-41 (LCFFTTVLVRLHILNPLFLYL) traverse the membrane as a helical segment. Over 42–54 (YYPRVFKKFEVWR) the chain is Lumenal. A helical transmembrane segment spans residues 55 to 75 (IFTSFFFLGPFSINFGIRLLM). At 76–94 (IARYGVMLEKGAFDKRTAD) the chain is on the cytoplasmic side. The chain crosses the membrane as a helical span at residues 95 to 115 (FLWMMIFGAISLLVLSVIPQL). Residues 116–155 (NTYVLGLPMVSMLVYVWSRENPNAQINIYGILQLKAFYLP) lie on the Lumenal side of the membrane. A helical membrane pass occupies residues 156–176 (WVMLLLDVIFGSPLMPGLLGI). Residues 177-243 (MVGHLYYYFA…FRGRSYRLNQ (67 aa)) lie on the Cytoplasmic side of the membrane.

It belongs to the derlin family. Expressed in roots and endosperm.

The protein localises to the endoplasmic reticulum membrane. In terms of biological role, may be involved in the degradation process of specific misfolded endoplasmic reticulum (ER) luminal proteins. In Zea mays (Maize), this protein is Derlin-1.2 (DER1.2).